Consider the following 257-residue polypeptide: Glutamate racemase (257 aa).

Substrate-binding positions include D12–S13 and Y44–G45. C75 acts as the Proton donor/acceptor in catalysis. Residue N76 to T77 participates in substrate binding. Catalysis depends on C185, which acts as the Proton donor/acceptor. Position 186 to 187 (T186 to H187) interacts with substrate.

It belongs to the aspartate/glutamate racemases family.

The enzyme catalyses L-glutamate = D-glutamate. Its pathway is cell wall biogenesis; peptidoglycan biosynthesis. Its function is as follows. Provides the (R)-glutamate required for cell wall biosynthesis. The sequence is that of Glutamate racemase from Clostridium botulinum (strain Kyoto / Type A2).